The following is a 254-amino-acid chain: Tubulin-specific chaperone B (254 aa).

Residues 182–225 (PLPLDVMGTWCGVEFPEAAGKNDGRINGVTLFGPVAPGHGSFVR) enclose the CAP-Gly domain. The disordered stretch occupies residues 234–254 (KDEESAEVEDVHDDVESDDEI). Acidic residues predominate over residues 237–254 (ESAEVEDVHDDVESDDEI).

It belongs to the TBCB family. Binds to monomeric alpha-tubulin.

Its subcellular location is the cytoplasm. The protein localises to the cytoskeleton. Its function is as follows. Acts to sequester alpha-tubulin from interaction with beta-tubulin, raising the possibility that it plays a regulatory role in the formation of the tubulin heterodimer. The protein is Tubulin-specific chaperone B (ALF1) of Saccharomyces cerevisiae (strain ATCC 204508 / S288c) (Baker's yeast).